The chain runs to 165 residues: Protein SprT (165 aa).

One can recognise a SprT-like domain in the interval 22-163 (LAQANLKLDR…RCVHCGEPLV (142 aa)). Residue H78 coordinates Zn(2+). E79 is an active-site residue. H82 lines the Zn(2+) pocket.

It belongs to the SprT family. Zn(2+) serves as cofactor.

It is found in the cytoplasm. This Salmonella agona (strain SL483) protein is Protein SprT.